Here is a 252-residue protein sequence, read N- to C-terminus: MSRTPIIAGNWKLHMNPEQTAEFVDAVKDKLPDPSKVESLICAPAVDLDALRKAAKGSNLHIGAENCYFEDEGAYTGETSPKVLKEMGIDYVIIGHSERRGYFHETDEDINKKAKAIFANGLKPIICCGESLETREANKQEDWVVGQIKAALDGLTAEQVSNLVIAYEPIWAIGTGKTASSDQAEEMCKTIRETVKDLYNEETAENVRIQYGGSVKPANVKELMSKPDIDGGLVGGASLKPESYLELVNYQD.

10–12 (NWK) provides a ligand contact to substrate. His96 acts as the Electrophile in catalysis. The active-site Proton acceptor is Glu168. Substrate-binding positions include Gly174, Ser214, and 235–236 (GG).

Belongs to the triosephosphate isomerase family. As to quaternary structure, homodimer.

The protein resides in the cytoplasm. It carries out the reaction D-glyceraldehyde 3-phosphate = dihydroxyacetone phosphate. It functions in the pathway carbohydrate biosynthesis; gluconeogenesis. The protein operates within carbohydrate degradation; glycolysis; D-glyceraldehyde 3-phosphate from glycerone phosphate: step 1/1. Functionally, involved in the gluconeogenesis. Catalyzes stereospecifically the conversion of dihydroxyacetone phosphate (DHAP) to D-glyceraldehyde-3-phosphate (G3P). This chain is Triosephosphate isomerase, found in Lactobacillus helveticus (strain DPC 4571).